The chain runs to 191 residues: Flavin reductase (NADH) (191 aa).

An FAD-binding site is contributed by 46 to 52 (YGLTCSA). Residue S55 participates in NAD(+) binding. Residue 72–73 (RV) participates in FAD binding. Residues H144 and 166–169 (YWRR) each bind NAD(+).

The protein belongs to the non-flavoprotein flavin reductase family.

The enzyme catalyses a reduced flavin + NAD(+) = an oxidized flavin + NADH + 2 H(+). Functionally, catalyzes the reduction of flavin by NADH. Subsequently, the reduced flavins is transferred to the tetracycline 7-halogenase CtcP. The polypeptide is Flavin reductase (NADH) (Kitasatospora aureofaciens (Streptomyces aureofaciens)).